Consider the following 256-residue polypeptide: Alcohol dehydrogenase (256 aa).

Position 2 is an N-acetylserine (Ser-2). Residues 12–41 (FVAGLGGIGLDTSKELLKRDLKNLVILDRI) and Asp-65 each bind NAD(+). Ser-140 contacts substrate. The active-site Proton acceptor is the Tyr-153. Residue Lys-157 coordinates NAD(+).

Belongs to the short-chain dehydrogenases/reductases (SDR) family. In terms of assembly, homodimer.

It catalyses the reaction a primary alcohol + NAD(+) = an aldehyde + NADH + H(+). The catalysed reaction is a secondary alcohol + NAD(+) = a ketone + NADH + H(+). With respect to regulation, inhibited by 2,2,2-trifluoroethanol and pyrazole. The chain is Alcohol dehydrogenase (Adh) from Drosophila melanogaster (Fruit fly).